Here is an 837-residue protein sequence, read N- to C-terminus: Protein TRANSPARENT TESTA 9 (837 aa).

The region spanning 42–192 (LRSIAEILTY…AVRALTLNVY (151 aa)) is the FPL domain. The tract at residues 366–386 (TEEANQQCSSTAAGMSDDGNS) is disordered. The span at 368–378 (EANQQCSSTAA) shows a compositional bias: polar residues.

Belongs to the CLEC16A/gop-1 family.

The protein resides in the golgi apparatus membrane. In terms of biological role, involved in membrane trafficking and vacuole development through membrane fusion at the vacuole. Required for membrane trafficking machinery and accumulation of flavonoids in the seed coat. This Arabidopsis thaliana (Mouse-ear cress) protein is Protein TRANSPARENT TESTA 9.